A 286-amino-acid polypeptide reads, in one-letter code: Transcription initiation factor IIA large subunit (286 aa).

3 disordered regions span residues 120-145 (NTVE…ADVT), 167-195 (TVEN…KEKE), and 208-236 (KRSA…EGEE). The span at 175–195 (SEKKDDEEKEEDVEKTRKEKE) shows a compositional bias: basic and acidic residues. Acidic residues predominate over residues 214 to 236 (DTDEVGSELDDSDDDYLISEGEE).

The protein belongs to the TFIIA subunit 1 family. As to quaternary structure, TFIIA is a heterodimer composed of the large TOA1 and a small TOA2 subunits. Interacts with KAP122.

It is found in the cytoplasm. The protein localises to the nucleus. TFIIA is a component of the transcription machinery of RNA polymerase II and implicated in the regulation of basal transcription. Interacts with TBP (the TATA-binding protein). The chain is Transcription initiation factor IIA large subunit (TOA1) from Saccharomyces cerevisiae (strain ATCC 204508 / S288c) (Baker's yeast).